The chain runs to 336 residues: D-altritol 5-dehydrogenase (336 aa).

7 residues coordinate Zn(2+): C37, H59, E60, C89, C92, C95, and C103.

It belongs to the zinc-containing alcohol dehydrogenase family. Zn(2+) serves as cofactor.

It catalyses the reaction D-altritol + NAD(+) = keto-D-tagatose + NADH + H(+). It participates in carbohydrate metabolism. In terms of biological role, involved in D-altritol catabolism. Catalyzes the oxidation of D-altritol to D-tagatose. The sequence is that of D-altritol 5-dehydrogenase from Agrobacterium fabrum (strain C58 / ATCC 33970) (Agrobacterium tumefaciens (strain C58)).